The following is a 453-amino-acid chain: 3-phosphoshikimate 1-carboxyvinyltransferase (453 aa).

Residues 1 to 27 (MSHDSEPQPVTATPGGPLNGSLKPPGD) are disordered. 3 residues coordinate 3-phosphoshikimate: Lys28, Ser29, and Arg33. Residue Lys28 participates in phosphoenolpyruvate binding. Phosphoenolpyruvate-binding residues include Gly101 and Arg129. The 3-phosphoshikimate site is built by Ser175, Gln177, Asp330, and Lys357. Gln177 is a phosphoenolpyruvate binding site. The active-site Proton acceptor is Asp330. The phosphoenolpyruvate site is built by Arg361 and Arg405.

This sequence belongs to the EPSP synthase family. Monomer.

It is found in the cytoplasm. The catalysed reaction is 3-phosphoshikimate + phosphoenolpyruvate = 5-O-(1-carboxyvinyl)-3-phosphoshikimate + phosphate. It participates in metabolic intermediate biosynthesis; chorismate biosynthesis; chorismate from D-erythrose 4-phosphate and phosphoenolpyruvate: step 6/7. Catalyzes the transfer of the enolpyruvyl moiety of phosphoenolpyruvate (PEP) to the 5-hydroxyl of shikimate-3-phosphate (S3P) to produce enolpyruvyl shikimate-3-phosphate and inorganic phosphate. In Methylorubrum extorquens (strain CM4 / NCIMB 13688) (Methylobacterium extorquens), this protein is 3-phosphoshikimate 1-carboxyvinyltransferase.